Consider the following 309-residue polypeptide: NAD kinase (309 aa).

Aspartate 89 (proton acceptor) is an active-site residue. NAD(+)-binding positions include 89 to 90 (DG), 163 to 164 (NE), arginine 191, aspartate 193, and 204 to 209 (TAYSLS).

It belongs to the NAD kinase family. A divalent metal cation serves as cofactor.

It localises to the cytoplasm. The catalysed reaction is NAD(+) + ATP = ADP + NADP(+) + H(+). Its function is as follows. Involved in the regulation of the intracellular balance of NAD and NADP, and is a key enzyme in the biosynthesis of NADP. Catalyzes specifically the phosphorylation on 2'-hydroxyl of the adenosine moiety of NAD to yield NADP. This chain is NAD kinase, found in Shewanella halifaxensis (strain HAW-EB4).